Consider the following 347-residue polypeptide: Endophilin-A3 (347 aa).

The segment at 1-21 (MSVAGLKKQFHKASQLFSEKI) is membrane-binding amphipathic helix. Residues 18 to 249 (SEKISGAEGT…LQMRISAASS (232 aa)) form the BAR domain. Positions 60-87 (PNPAYRAKLGMLNTVSKIRGQVKTTGYP) are required for dimerization upon membrane association. Residues 181–201 (EEVRQAVEKFEESKELAERSM) adopt a coiled-coil conformation. The interval 218–254 (FIEAALDYHRQSTEILQELQSKLQMRISAASSVPRRE) is interaction with ARC. A disordered region spans residues 248–271 (SSVPRREYKPRPVKRSSSELNGVS). Phosphoserine is present on serine 265. The region spanning 285–344 (MDQPCCRGLYDFEPENQGELGFKEGDIITLTNQIDENWYEGMIHGESGFFPINYVEVIVP) is the SH3 domain.

It belongs to the endophilin family. As to quaternary structure, interacts with ARC. Interacts with DNM1, SGIP1 and SYNJ1. Interacts with the huntingtin exon 1 protein (HDEX1P) containing a glutamine repeat in the pathological range and promotes formation of insoluble polyglutamine-containing aggregates in vivo. Interacts with DYDC1. Interacts with FASLG. Interacts with ATXN2. Interacts with BIN2. As to expression, brain and testis.

Its subcellular location is the cytoplasm. It is found in the early endosome membrane. Its function is as follows. Implicated in endocytosis. May recruit other proteins to membranes with high curvature. This Homo sapiens (Human) protein is Endophilin-A3 (SH3GL3).